We begin with the raw amino-acid sequence, 543 residues long: ABC transport system permease protein p69 (543 aa).

Transmembrane regions (helical) follow at residues 18-38 (IWYWKLLIIIAVLAIVIYSWI), 78-98 (AFFVTGGSFLGFIFAILFSYW), 115-135 (ITIVLRAFPVLLFGFLFSNLF), 141-161 (ATLTISWFSFLWNTKYITTFF), 211-231 (TLLSIFGIGGIGQLIVDPLSI), 237-257 (LVLIPLVVLITFLIFIEVVVF), 288-308 (IIFILFIVVLISLSLANLVTI), 354-374 (ISLISLVVIFSILFGFISCNL), 379-399 (FSISFKILLLFVRVVPSILLF), 413-433 (IILVLLINHGSSYGQLMSINF), 482-502 (LILFGSFGGSIIGSRITNFFE), and 510-530 (GSVTIPLMVYLIAIEIIFLSV). Residues 74 to 256 (LAQTAFFVTG…TFLIFIEVVV (183 aa)) enclose the ABC transmembrane type-1 domain.

This sequence belongs to the binding-protein-dependent transport system permease family.

It is found in the cell membrane. Functionally, probably part of a high-affinity transport system. In Mycoplasma genitalium (strain ATCC 33530 / DSM 19775 / NCTC 10195 / G37) (Mycoplasmoides genitalium), this protein is ABC transport system permease protein p69 (p69).